The sequence spans 1690 residues: Trinucleotide repeat-containing gene 6C protein (1690 aa).

Polar residues-rich tracts occupy residues 1–12, 19–36, and 160–183; these read MATGSAQSSFPS, GSHG…NQSA, and AEPQ…NTDG. Disordered stretches follow at residues 1-42, 158-202, 226-848, and 863-928; these read MATG…AGGT, ESAE…AMQT, PGAN…EPVV, and CKPA…TPGK. The tract at residues 1–921 is sufficient for interaction with argonaute family proteins; that stretch reads MATGSAQSSF…GNTSKKGLQK (921 aa). Over residues 184–198 the composition is skewed to low complexity; it reads PNNTNPMNSSPNPIN. Residues 255-288 are compositionally biased toward polar residues; sequence NPATGSTNCGFSQGNGDTVNSALSAKQNGSSSAV. The residue at position 313 (arginine 313) is an Omega-N-methylarginine. Residues 362 to 374 are compositionally biased toward polar residues; sequence GWDSASAASQTPA. Residues 384–404 are compositionally biased toward low complexity; sequence SWAKATSSGTTASEGSSDGSG. A compositionally biased stretch (basic and acidic residues) spans 415-426; that stretch reads GTGEGRRRDKGV. Over residues 444-459 the composition is skewed to polar residues; it reads LSNSGWGQTPVKQNTA. The span at 464–474 shows a compositional bias: basic and acidic residues; that stretch reads ESPRSERKNDN. The residue at position 465 (serine 465) is a Phosphoserine. Polar residues-rich tracts occupy residues 482–510, 519–530, 540–551, 644–656, and 663–678; these read IATQ…SGWV, ANTSWGDSNNKA, SISSTAVNNAAA, GTNA…TNWG, and PQQN…NVSN. Serine 714 carries the phosphoserine modification. Low complexity predominate over residues 754–771; sequence SSTTAPATPTTPTSSSTT. Threonine 776 carries the post-translational modification Phosphothreonine. Polar residues predominate over residues 778–788; sequence PSHQAGTQLNR. Low complexity predominate over residues 901 to 915; that stretch reads SQESSSSCSSWGNTS. A UBA domain is found at 928-973; that stretch reads KQDEAWIMSRLIKQLTDMGFPREPAEEALKSNSMNLDQAMSALLEK. The residue at position 1006 (serine 1006) is a Phosphoserine. Positions 1156-1214 form a coiled coil; the sequence is QLQLAYQRLQIQQQMLQAQRNVSGPMRQQEQQVARTITNLQQQIQQHQRQLAQALLVKQ. Disordered stretches follow at residues 1212–1337, 1351–1380, 1397–1421, 1441–1486, and 1600–1625; these read VKQP…PPGK, QNSE…ISNG, GLQN…PTIN, IKST…PSST, and PPTS…THGL. A compositionally biased stretch (pro residues) spans 1214–1223; the sequence is QPPPPPPPPH. A silencing domain; interaction with CNOT1 and PAN3 region spans residues 1260 to 1690; that stretch reads NTFAPYPLAG…PGDLLSGESI (431 aa). Residues 1272–1321 show a composition bias toward polar residues; sequence PNMNVNSIDMSSGLSVKDPSQSQSRLPQWTHPNSMGNLSSAASPLDQNPS. The required for interaction with PABPC1 stretch occupies residues 1371–1417; that stretch reads KSDSDKISNGSSISWPPEFHPGVPWKGLQNIDPENDPDVTPGSVPTG. The tract at residues 1371-1690 is sufficient for translational repression when tethered to a target mRNA; that stretch reads KSDSDKISNG…PGDLLSGESI (320 aa). Residues 1381-1399 form a PABPC1-interacting motif-2 (PAM2) region; that stretch reads SSISWPPEFHPGVPWKGLQ. A compositionally biased stretch (polar residues) spans 1441 to 1457; the sequence is IKSTWSSGPASHTQASL. Residues 1565-1632 form the RRM domain; that stretch reads AQKSLHMCVL…HGLVRSDTAH (68 aa). Positions 1596 to 1690 are interaction with the CCR4-NOT complex; the sequence is GQALPPTSSW…PGDLLSGESI (95 aa). The segment covering 1603–1613 has biased composition (low complexity); it reads SSWQSSSGGSQ.

Belongs to the GW182 family. In terms of assembly, interacts with one or more of the argonaute family proteins AGO1, AGO2, AGO3 and AGO4. Interacts with CNOT1; the interaction mediates the association with the CCR4-NOT complex. Interacts with PAN3; the interaction mediates the association with the PAN complex.

Plays a role in RNA-mediated gene silencing by micro-RNAs (miRNAs). Required for miRNA-dependent translational repression of complementary mRNAs by argonaute family proteins As scaffoldng protein associates with argonaute proteins bound to partially complementary mRNAs and simultaneously can recruit CCR4-NOT and PAN deadenylase complexes. The sequence is that of Trinucleotide repeat-containing gene 6C protein (Tnrc6c) from Mus musculus (Mouse).